The primary structure comprises 224 residues: uncharacterized protein (224 aa).

This is an uncharacterized protein from Listeria innocua serovar 6a (strain ATCC BAA-680 / CLIP 11262).